Here is a 472-residue protein sequence, read N- to C-terminus: MVVGDVTTGTELLVIGGGPGGYVAAIRGAQLGLDTTLVERDAYGGTCLNHGCIPSKALISASDVAHDARQAESMGVFADPAVDMAGMTEWKDGVVTRLTRGVESLCKNAGVNLVEGTAEFVDDGTVRVAHGGEGQGSESLSFEHAIVATGSRPMAVPGFEFDGEHILSSKDALALESVPEKLLVVGAGYIGMELSTVFAKLGAEVTVVEMLDDVLPGYEDDIATVVRDRAEELGIDFNFGEAADNWEETDEGIRVQTVDEDEVVTEYNAEKCLVAVGREPVTDTLALDNIDLQTDENGVIPTDDQCRTAFESVFAVGDVAGEPMLAHKAMAEGEVAARAAAGEPAAFDHQAIPAAVFTDPEIATVGMTESEAEAAGFEPVIGQMPVRANGRALTVNEKEGFVRVVADADEEFLLGAQIVGPEASELIAELGLGIEMGARLEDIAGTIHTHPTLSEAVHEAAAAARGEAVHTR.

FAD contacts are provided by residues Glu-39–Cys-47, Lys-56, and Ala-118. Cys-47 and Cys-52 form a disulfide bridge. NAD(+) contacts are provided by residues Gly-186–Ile-190, Glu-209, and Ala-275–Arg-278. FAD contacts are provided by Asp-318 and Ala-326. His-450 serves as the catalytic Proton acceptor.

The protein belongs to the class-I pyridine nucleotide-disulfide oxidoreductase family. Homodimer. FAD is required as a cofactor.

The protein resides in the cytoplasm. It carries out the reaction N(6)-[(R)-dihydrolipoyl]-L-lysyl-[protein] + NAD(+) = N(6)-[(R)-lipoyl]-L-lysyl-[protein] + NADH + H(+). The sequence is that of Dihydrolipoyl dehydrogenase 2 (lpdA2) from Haloarcula marismortui (strain ATCC 43049 / DSM 3752 / JCM 8966 / VKM B-1809) (Halobacterium marismortui).